We begin with the raw amino-acid sequence, 122 residues long: uncharacterized protein (122 aa).

This is an uncharacterized protein from Arabidopsis thaliana (Mouse-ear cress).